Consider the following 415-residue polypeptide: Pectin acetylesterase 12 (415 aa).

The first 20 residues, 1–20 (MVKLLLVGFVVAGIILGTQA), serve as a signal peptide directing secretion. N-linked (GlcNAc...) asparagine glycosylation is present at asparagine 27. Catalysis depends on charge relay system residues serine 197, aspartate 293, and histidine 360.

This sequence belongs to the pectinacetylesterase family.

It localises to the secreted. Its subcellular location is the cell wall. Hydrolyzes acetyl esters in homogalacturonan regions of pectin. In type I primary cell wall, galacturonic acid residues of pectin can be acetylated at the O-2 and O-3 positions. Decreasing the degree of acetylation of pectin gels in vitro alters their physical properties. The polypeptide is Pectin acetylesterase 12 (Arabidopsis thaliana (Mouse-ear cress)).